The sequence spans 165 residues: MYIEIVDETGLVSEEIIKQTQDILEFAAQKTGKEKKEMAVTFVTNERSHELNLEYRDTDRPTDVISLEYKPELDIAVDEEDLLNHPELAEMLDDFDAYIGELFISVDKAREQAEEYGHSFKREMGFLAVHGFLHINGYDHYTPEEEAEMFGLQEEILTAYGLTRE.

3 residues coordinate Zn(2+): His130, His134, and His140.

Belongs to the endoribonuclease YbeY family. Requires Zn(2+) as cofactor.

It is found in the cytoplasm. In terms of biological role, single strand-specific metallo-endoribonuclease involved in late-stage 70S ribosome quality control and in maturation of the 3' terminus of the 16S rRNA. The polypeptide is Endoribonuclease YbeY (Streptococcus gordonii (strain Challis / ATCC 35105 / BCRC 15272 / CH1 / DL1 / V288)).